The primary structure comprises 334 residues: tRNA dimethylallyltransferase (334 aa).

22–29 (GPTASGKT) lines the ATP pocket. Residue 24–29 (TASGKT) participates in substrate binding.

It belongs to the IPP transferase family. Monomer. Mg(2+) serves as cofactor.

It carries out the reaction adenosine(37) in tRNA + dimethylallyl diphosphate = N(6)-dimethylallyladenosine(37) in tRNA + diphosphate. In terms of biological role, catalyzes the transfer of a dimethylallyl group onto the adenine at position 37 in tRNAs that read codons beginning with uridine, leading to the formation of N6-(dimethylallyl)adenosine (i(6)A). In Rhodopirellula baltica (strain DSM 10527 / NCIMB 13988 / SH1), this protein is tRNA dimethylallyltransferase.